We begin with the raw amino-acid sequence, 384 residues long: Putative spore germination protein YfkR (384 aa).

A signal peptide spans 1-20; the sequence is MKKTIYKCVLPLLICILLTG. Cys-21 is lipidated: N-palmitoyl cysteine. A lipid anchor (S-diacylglycerol cysteine) is attached at Cys-21.

Belongs to the GerABKC lipoprotein family.

Its subcellular location is the cell membrane. In terms of biological role, may be involved in spore germination. In Bacillus subtilis (strain 168), this protein is Putative spore germination protein YfkR (yfkR).